A 786-amino-acid polypeptide reads, in one-letter code: Elastin (786 aa).

Residues 1–26 (MAGLTAAAPRPGVLLLLLSILHPSRP) form the signal peptide. Position 34 is a hydroxyproline (Pro34). A hydroxyproline; partial mark is found at Pro65, Pro67, and Pro88. Allysine is present on residues Lys104 and Lys107. A 4-hydroxyproline; partial modification is found at Pro116. Pro156, Pro167, Pro170, and Pro177 each carry hydroxyproline; partial. Pro190 is modified (4-hydroxyproline; partial). 3 positions are modified to allysine: Lys241, Lys261, and Lys265. A 4-hydroxyproline; partial mark is found at Pro283 and Pro286. At Pro290 the chain carries Hydroxyproline; partial. Allysine is present on residues Lys312 and Lys315. 3 positions are modified to 4-hydroxyproline; partial: Pro327, Pro342, and Pro347. Residues Pro352 and Pro355 each carry the hydroxyproline; partial modification. At Pro360 the chain carries 4-hydroxyproline; partial. 3 positions are modified to allysine: Lys375, Lys379, and Lys382. A 4-hydroxyproline; partial modification is found at Pro415. Position 421 is a hydroxyproline; partial (Pro421). Pro427 carries the post-translational modification 4-hydroxyproline; partial. An allysine mark is found at Lys448 and Lys451. At Pro465 the chain carries Hydroxyproline; partial. A 4-hydroxyproline; partial modification is found at Pro481. Lys492 and Lys496 each carry allysine. Hydroxyproline; partial occurs at positions 522 and 550. Residues Lys558, Lys562, and Lys566 each carry the allysine modification. Pro580 is subject to 4-hydroxyproline; partial. 2 positions are modified to 4-hydroxyproline: Pro589 and Pro598. Pro607 bears the 4-hydroxyproline; partial mark. A disordered region spans residues 615–645 (EGVRRSLSPELREGDPSSSQHLPSTPSSPRV). A compositionally biased stretch (low complexity) spans 630–645 (PSSSQHLPSTPSSPRV). A Hydroxyproline; partial modification is found at Pro646. 2 positions are modified to allysine: Lys653 and Lys656. A 4-hydroxyproline; partial modification is found at Pro677. Lys693, Lys697, Lys735, and Lys738 each carry allysine. Hydroxyproline; partial is present on residues Pro769 and Pro772. Residues Cys776 and Cys781 are joined by a disulfide bond.

The protein belongs to the elastin family. In terms of assembly, the polymeric elastin chains are cross-linked together into an extensible 3D network. Forms a ternary complex with BGN and MFAP2. Interacts with MFAP2 via divalent cations (calcium &gt; magnesium &gt; manganese) in a dose-dependent and saturating manner. Interacts with FBLN5. Interacts with FBN1. Forms a ternary complex with FBN1 and FBLN2 or FBLN5. Interacts with MFAP4 in a Ca (2+)-dependent manner; this interaction promotes ELN self-assembly. Interacts with EFEMP2 with moderate affinity. In terms of processing, elastin is formed through the cross-linking of its soluble precursor tropoelastin. Cross-linking is initiated through the action of lysyl oxidase on exposed lysines to form allysine. Subsequent spontaneous condensation reactions with other allysine or unmodified lysine residues result in various bi-, tri-, and tetrafunctional cross-links. The most abundant cross-links in mature elastin fibers are lysinonorleucine, allysine aldol, desmosine, and isodesmosine. Post-translationally, hydroxylation on proline residues within the sequence motif, GXPG, is most likely 4-hydroxy as this fits the requirement for 4-hydroxylation in vertebrates. Expressed within the outer myometrial smooth muscle and throughout the arteriolar tree of uterus (at protein level). Also expressed in the large arteries, lung and skin.

It localises to the secreted. Its subcellular location is the extracellular space. The protein localises to the extracellular matrix. Major structural protein of tissues such as aorta and nuchal ligament, which must expand rapidly and recover completely. Molecular determinant of the late arterial morphogenesis, stabilizing arterial structure by regulating proliferation and organization of vascular smooth muscle. This is Elastin (ELN) from Homo sapiens (Human).